A 306-amino-acid chain; its full sequence is Pseudouridine-5'-phosphate glycosidase (306 aa).

Residue Glu28 is the Proton donor of the active site. 2 residues coordinate substrate: Lys89 and Val109. A Mn(2+)-binding site is contributed by Asp139. Residue 141–143 coordinates substrate; the sequence is SAD. Lys160 serves as the catalytic Nucleophile.

The protein belongs to the pseudouridine-5'-phosphate glycosidase family. As to quaternary structure, homotrimer. The cofactor is Mn(2+).

It catalyses the reaction D-ribose 5-phosphate + uracil = psi-UMP + H2O. Its function is as follows. Catalyzes the reversible cleavage of pseudouridine 5'-phosphate (PsiMP) to ribose 5-phosphate and uracil. Functions biologically in the cleavage direction, as part of a pseudouridine degradation pathway. This chain is Pseudouridine-5'-phosphate glycosidase, found in Gemmatimonas aurantiaca (strain DSM 14586 / JCM 11422 / NBRC 100505 / T-27).